We begin with the raw amino-acid sequence, 433 residues long: MTVKIGLLGLGTVGSGTVEILQDPQGRSPLLKAIEVKAVGVRSLDKPRQVNLPPEVLTTDLEAIVTDPDIAIVVELMGGLEPARSLILQAIAHKKHIVTANKAVIARYGPEIYEAANQHGVYVLLEAAVGGGIPIIKPLKQSLGGNRIQSIVGILNGTTNYILSRMTSEGADFDEVLTAAQQLGYAEADPSADVDGLDAADKIAILASLGFGGRVKREDVACEGIRSVSAVDIAYADRLGFVIKLLAIADGNAGEDSEALQLRVHPTLIAKDHPLASVNGVYNGVLVTGDPLGQVMFYGRGAGAGPTASAVVSDVINIVGIITSSDENPALDPLLSCTHQHYCQVSPIEDLVTRFYCRFLCADVPGVIGHLGMGFGNHGVSLESLVQIGFTDGCAEIVVVTHDVREGDYRAALEEISQLEAVKEIPSVIRVLS.

Residues T12, V13, and K102 each coordinate NADPH. V13 serves as a coordination point for NAD(+). V13 and K102 together coordinate NADP(+). Positions 126, 129, 131, and 133 each coordinate Na(+). 2 residues coordinate NADP(+): G184 and E187. E187 and D198 together coordinate L-homoserine. The active-site Proton donor is K202. G303 serves as a coordination point for NADPH. G303 lines the NAD(+) pocket. G303 serves as a coordination point for NADP(+). Residues 356–433 (YCRFLCADVP…EIPSVIRVLS (78 aa)) enclose the ACT domain.

This sequence belongs to the homoserine dehydrogenase family. The cofactor is a metal cation.

It catalyses the reaction L-homoserine + NADP(+) = L-aspartate 4-semialdehyde + NADPH + H(+). It carries out the reaction L-homoserine + NAD(+) = L-aspartate 4-semialdehyde + NADH + H(+). It participates in amino-acid biosynthesis; L-methionine biosynthesis via de novo pathway; L-homoserine from L-aspartate: step 3/3. Its pathway is amino-acid biosynthesis; L-threonine biosynthesis; L-threonine from L-aspartate: step 3/5. Functionally, catalyzes the conversion of L-aspartate-beta-semialdehyde (L-Asa) to L-homoserine (L-Hse), the third step in the biosynthesis of threonine and methionine from aspartate. This Synechocystis sp. (strain ATCC 27184 / PCC 6803 / Kazusa) protein is Homoserine dehydrogenase (hom).